The chain runs to 262 residues: uncharacterized protein (262 aa).

Belongs to the glycosyltransferase 2 family.

This is an uncharacterized protein from Mycobacterium tuberculosis (strain CDC 1551 / Oshkosh).